We begin with the raw amino-acid sequence, 455 residues long: Protein indeterminate-domain 7 (455 aa).

Residues 1–52 (MMMNRDILFHQQQQQQMEENMSNLTSASGDQASVSSGNRTETSGSNINQHHQ) are disordered. Residues 17–49 (MEENMSNLTSASGDQASVSSGNRTETSGSNINQ) are compositionally biased toward polar residues. Position 82 is a phosphoserine (S82). 2 consecutive C2H2-type zinc fingers follow at residues 92-114 (FICEVCNKGFQRDQNLQLHKRGH) and 134-164 (YVCPEPGCVHHHPSRALGDLTGIKKHFFRKH). Positions 156-163 (IKKHFFRK) match the Nuclear localization signal motif. Residues 169–192 (WKCEKCSKKYAVQSDWKAHAKTCG) form a C2H2-type 2; degenerate zinc finger. Zn(2+)-binding residues include C171, C174, H187, C191, C198, C200, H213, and C217. Residues 196–219 (YKCDCGTLFSRRDSFITHRAFCDA) form a CCHC-type 2; atypical zinc finger. An SHR-binding region spans residues 206 to 218 (RRDSFITHRAFCD). Residues 235 to 351 (QASNSPHHHH…PEEEERSSRS (117 aa)) are disordered. Low complexity-rich tracts occupy residues 248–265 (QQNIGFSSSSQNIISNSN) and 288–299 (SSNPNPNGNNGN).

The protein localises to the nucleus. Functionally, probable transcription factor. The protein is Protein indeterminate-domain 7 of Arabidopsis thaliana (Mouse-ear cress).